The sequence spans 627 residues: MALVSIAPLASKSCLHKSLSSSAHELKTICRTIPTLGMSRRGKSATPSMSMSLTTTVSDDGVQRRMGDFHSNLWNDDFIQSLSTSYGEPSYRERAERLIGEVKKMFNSMSSEDGELINPHNDLIQRVWMVDSVERLGIERHFKNEIKSALDYVYSYWSEKGIGCGRESVVADLNSTALGLRTLRLHGYAVSADVLNLFKDQNGQFACSPSQTEEEIGSVLNLYRASLIAFPGEKVMEEAEIFSAKYLEEALQKISVSSLSQEIRDVLEYGWHTYLPRMEARNHIDVFGQDTQNSKSCINTEKLLELAKLEFNIFHSLQKRELEYLVRWWKDSGSPQMTFGRHRHVEYYTLASCIAFEPQHSGFRLGFAKTCHIITILDDMYDTFGTVDELELFTAAMKRWNPSAADCLPEYMKGMYMIVYDTVNEICQEAEKAQGRNTLDYARQAWDEYLDSYMQEAKWIVTGYLPTFAEYYENGKVSSGHRTAALQPILTMDIPFPPHILKEVDFPSKLNDLACAILRLRGDTRCYKADRARGEEASSISCYMKDNPGVTEEDALDHINAMISDVIRGLNWELLNPNSSVPISSKKHVFDISRAFHYGYKYRDGYSVANIETKSLVKRTVIDPVTL.

The N-terminal 36 residues, 1–36, are a transit peptide targeting the chloroplast; that stretch reads MALVSIAPLASKSCLHKSLSSSAHELKTICRTIPTL. Asp378, Asp382, and Asp530 together coordinate Mg(2+). The DDXXD motif signature appears at 378-382; sequence DDMYD.

Belongs to the terpene synthase family. Tpsd subfamily. It depends on Mg(2+) as a cofactor. Mn(2+) serves as cofactor.

Its subcellular location is the plastid. It localises to the chloroplast. The enzyme catalyses (2E)-geranyl diphosphate = (1S,5S)-beta-pinene + diphosphate. It catalyses the reaction (2E)-geranyl diphosphate = (1S,5S)-alpha-pinene + diphosphate. Its pathway is terpene metabolism; oleoresin biosynthesis. In terms of biological role, terpene synthase (TPS) involved in the biosynthesis of monoterpene natural products included in conifer oleoresin secretions and volatile emissions; these compounds contribute to biotic and abiotic stress defense against herbivores and pathogens. Catalyzes the conversion of (2E)-geranyl diphosphate (GPP) to (1S,5S)-beta-pinene. The polypeptide is (-)-alpha-pinene synthase 2, chloroplastic (Picea glauca (White spruce)).